The chain runs to 362 residues: Chorismate synthase (362 aa).

NADP(+) is bound at residue arginine 46. FMN is bound by residues 122 to 124 (RSS), 238 to 239 (NA), glycine 278, 293 to 297 (KPTPS), and arginine 319.

The protein belongs to the chorismate synthase family. As to quaternary structure, homotetramer. The cofactor is FMNH2.

The catalysed reaction is 5-O-(1-carboxyvinyl)-3-phosphoshikimate = chorismate + phosphate. It functions in the pathway metabolic intermediate biosynthesis; chorismate biosynthesis; chorismate from D-erythrose 4-phosphate and phosphoenolpyruvate: step 7/7. Catalyzes the anti-1,4-elimination of the C-3 phosphate and the C-6 proR hydrogen from 5-enolpyruvylshikimate-3-phosphate (EPSP) to yield chorismate, which is the branch point compound that serves as the starting substrate for the three terminal pathways of aromatic amino acid biosynthesis. This reaction introduces a second double bond into the aromatic ring system. The protein is Chorismate synthase of Campylobacter jejuni subsp. doylei (strain ATCC BAA-1458 / RM4099 / 269.97).